Reading from the N-terminus, the 487-residue chain is Aspartyl/glutamyl-tRNA(Asn/Gln) amidotransferase subunit B (487 aa).

It belongs to the GatB/GatE family. GatB subfamily. In terms of assembly, heterotrimer of A, B and C subunits.

The enzyme catalyses L-glutamyl-tRNA(Gln) + L-glutamine + ATP + H2O = L-glutaminyl-tRNA(Gln) + L-glutamate + ADP + phosphate + H(+). The catalysed reaction is L-aspartyl-tRNA(Asn) + L-glutamine + ATP + H2O = L-asparaginyl-tRNA(Asn) + L-glutamate + ADP + phosphate + 2 H(+). Its function is as follows. Allows the formation of correctly charged Asn-tRNA(Asn) or Gln-tRNA(Gln) through the transamidation of misacylated Asp-tRNA(Asn) or Glu-tRNA(Gln) in organisms which lack either or both of asparaginyl-tRNA or glutaminyl-tRNA synthetases. The reaction takes place in the presence of glutamine and ATP through an activated phospho-Asp-tRNA(Asn) or phospho-Glu-tRNA(Gln). The protein is Aspartyl/glutamyl-tRNA(Asn/Gln) amidotransferase subunit B of Chlamydia abortus (strain DSM 27085 / S26/3) (Chlamydophila abortus).